Consider the following 381-residue polypeptide: L-lactate dehydrogenase (381 aa).

Positions 1–380 constitute an FMN hydroxy acid dehydrogenase domain; that stretch reads MIISASTDYR…SRDSLVRELG (380 aa). Tyr24 contacts substrate. FMN is bound by residues Ser106 and Gln127. Tyr129 provides a ligand contact to substrate. Thr155 lines the FMN pocket. Arg164 is a binding site for substrate. Lys251 contributes to the FMN binding site. His275 (proton acceptor) is an active-site residue. A substrate-binding site is contributed by Arg278. Residue 306–330 participates in FMN binding; it reads DSGIRSGLDVVRMIALGADTVLIGR.

The protein belongs to the FMN-dependent alpha-hydroxy acid dehydrogenase family. In terms of assembly, homotetramer. FMN is required as a cofactor.

The protein resides in the cell inner membrane. The catalysed reaction is (S)-lactate + A = pyruvate + AH2. Catalyzes the conversion of L-lactate to pyruvate. Is coupled to the respiratory chain. This Pseudomonas putida (strain W619) protein is L-lactate dehydrogenase.